The primary structure comprises 624 residues: Phosphomethylpyrimidine synthase (624 aa).

The tract at residues 48–70 (SDTHTSQGREKNPPLTVYDTSGP) is disordered. Residues asparagine 229, methionine 258, tyrosine 287, histidine 323, 343-345 (SRG), 384-387 (DGLR), and glutamate 423 contribute to the substrate site. Zn(2+) is bound at residue histidine 427. A substrate-binding site is contributed by tyrosine 450. Histidine 491 lines the Zn(2+) pocket. Positions 571, 574, and 579 each coordinate [4Fe-4S] cluster.

It belongs to the ThiC family. As to quaternary structure, homodimer. It depends on [4Fe-4S] cluster as a cofactor.

It catalyses the reaction 5-amino-1-(5-phospho-beta-D-ribosyl)imidazole + S-adenosyl-L-methionine = 4-amino-2-methyl-5-(phosphooxymethyl)pyrimidine + CO + 5'-deoxyadenosine + formate + L-methionine + 3 H(+). Its pathway is cofactor biosynthesis; thiamine diphosphate biosynthesis. Its function is as follows. Catalyzes the synthesis of the hydroxymethylpyrimidine phosphate (HMP-P) moiety of thiamine from aminoimidazole ribotide (AIR) in a radical S-adenosyl-L-methionine (SAM)-dependent reaction. This Nitrosococcus oceani (strain ATCC 19707 / BCRC 17464 / JCM 30415 / NCIMB 11848 / C-107) protein is Phosphomethylpyrimidine synthase.